Reading from the N-terminus, the 244-residue chain is MALMLVLFFLAAVLPPSLLQDSSQENRLEKLSTTKMSVQEEIVSKHNQLRRMVSPSGSDLLKMEWNYDAQVNAQQWADKCTFSHSPIELRTTNLRCGENLFMSSYLASWSSAIQGWYNEYKDLTYDVGPKQPDSVVGHYTQVVWNSTFQVACGVAECPKNPLRYYYVCHYCPVGNYQGRLYTPYTAGEPCASCPDHCEDGLCTNSCGHEDKYTNCKYLKKMLSCEHELLKKGCKATCLCEGKIH.

An N-terminal signal peptide occupies residues 1–19 (MALMLVLFFLAAVLPPSLL). Residues 44–170 (SKHNQLRRMV…PLRYYYVCHY (127 aa)) form the SCP domain. Asparagine 145 is a glycosylation site (N-linked (GlcNAc...) asparagine). 5 cysteine pairs are disulfide-bonded: cysteine 190–cysteine 197, cysteine 193–cysteine 202, cysteine 206–cysteine 239, cysteine 215–cysteine 233, and cysteine 224–cysteine 237. Residues 206–239 (CGHEDKYTNCKYLKKMLSCEHELLKKGCKATCLC) enclose the ShKT domain.

It belongs to the CRISP family. As to expression, mainly found in the cauda epididymis where it is synthesized by the principal cells and secreted into the lumen. Binds to the heads of spermatozoa. Also expressed in the submandibular gland.

The protein localises to the cytoplasmic vesicle. It localises to the secretory vesicle. In terms of biological role, this protein is supposed to help spermatozoa undergo functional maturation while they move from the testis to the ductus deferens. This is Cysteine-rich secretory protein 1 (Crisp1) from Mus musculus (Mouse).